The sequence spans 433 residues: 3-phosphoshikimate 1-carboxyvinyltransferase (433 aa).

Residues K20, S21, and R25 each coordinate 3-phosphoshikimate. K20 is a phosphoenolpyruvate binding site. Phosphoenolpyruvate is bound by residues G92 and R121. 3-phosphoshikimate is bound by residues S167, S168, Q169, S195, D315, and K342. Residue Q169 participates in phosphoenolpyruvate binding. D315 (proton acceptor) is an active-site residue. Residues R346 and R388 each coordinate phosphoenolpyruvate.

Belongs to the EPSP synthase family. Monomer.

Its subcellular location is the cytoplasm. The catalysed reaction is 3-phosphoshikimate + phosphoenolpyruvate = 5-O-(1-carboxyvinyl)-3-phosphoshikimate + phosphate. Its pathway is metabolic intermediate biosynthesis; chorismate biosynthesis. Catalyzes the transfer of the enolpyruvyl moiety of phosphoenolpyruvate (PEP) to the 5-hydroxyl of shikimate-3-phosphate (S3P) to produce enolpyruvyl shikimate-3-phosphate and inorganic phosphate. The sequence is that of 3-phosphoshikimate 1-carboxyvinyltransferase from Methanococcus aeolicus (strain ATCC BAA-1280 / DSM 17508 / OCM 812 / Nankai-3).